Reading from the N-terminus, the 68-residue chain is Large ribosomal subunit protein uL29 (68 aa).

Belongs to the universal ribosomal protein uL29 family.

This Roseobacter denitrificans (strain ATCC 33942 / OCh 114) (Erythrobacter sp. (strain OCh 114)) protein is Large ribosomal subunit protein uL29.